Reading from the N-terminus, the 505-residue chain is MEEFQRHIELDRSWQHNFLYPLIFQEYIYAFAYDHGLNKSILLENSGDKKYSLLIVKRLITRMYQQNHLILSANDSNQNAILGHKQKNNLYSQMITEGFAVIVEIPFSLLLISSLGEKKIVKSHNLRSIHSIFPFLEDKLLHLNYVLDILITYPAHLEILVQTLRYWVKDASSLHLLRFFLYEYRNLNSLITPNQLISFLKKRNQRLFLFLYNFHVCEYESLFVFLCNQSSYLRSTSFGALIERIYFYGKLKYLVKVFTKDFGVILWLFREPFPHYVRYQGKSILASKGTSLLMHKWKYYLIYFGQCHFSVWSQPKRLYINRLSNHSLDFMGFLSSVRLNSSVIRSQMLENSFLIENISKKFDTIVPIIPLVGSLAKAKFCNVLGHPISKSVWTDLSDSDILDRFGRICRNISHYYSGSSRXXXXXXXXXXXRIFCARTLSGKHKSTVRAFLNRLRSEFLEEFFTEEEKVLSLILPRDSSISRGLYRGRIWYLDIICIHNLANDE.

Belongs to the intron maturase 2 family. MatK subfamily.

It localises to the plastid. Its subcellular location is the chloroplast. Its function is as follows. Usually encoded in the trnK tRNA gene intron. Probably assists in splicing its own and other chloroplast group II introns. In Blitum bonus-henricus (Good King Henry), this protein is Maturase K.